A 474-amino-acid polypeptide reads, in one-letter code: BPI fold-containing family B member 1 (474 aa).

The N-terminal stretch at 1 to 21 is a signal peptide; that stretch reads MAGPWIITLLCGLLGATLVQA. 4 N-linked (GlcNAc...) asparagine glycosylation sites follow: asparagine 153, asparagine 160, asparagine 263, and asparagine 400. The cysteines at positions 157 and 200 are disulfide-linked.

It belongs to the BPI/LBP/Plunc superfamily. Plunc family. In terms of tissue distribution, expressed in tongue, lung, thymus, and stomach. Expressed in epithelia of palate, anterior pharynx, trachea and upper bronchi. Expressed in distal tip of papillae in the anterior third of the tongue and in serous cells of von Ebner glands in the posterior third of the tongue. Expressed in columnar epithelium of the duodenum in embryonic gut at 16.5 dpc.

Its subcellular location is the secreted. Its function is as follows. May play a role in innate immunity in mouth, nose and lungs. Binds bacterial lipopolysaccharide (LPS) and modulates the cellular responses to LPS. May be involved in formation of the left-right axis in the node of the developing embryo. The chain is BPI fold-containing family B member 1 (Bpifb1) from Mus musculus (Mouse).